Consider the following 523-residue polypeptide: Peptidyl-prolyl cis-trans isomerase 4 (523 aa).

One can recognise a U-box domain in the interval 38–111 (KRLPINHCSL…GKFRCPVTFR (74 aa)). The PPIase cyclophilin-type domain occupies 278-433 (KNAFVRLVTN…VSVVIMRAEV (156 aa)).

The protein belongs to the cyclophilin-type PPIase family. PPIL2 subfamily. As to quaternary structure, interacts with mep-1. As to expression, exclusively in the larval body wall striated muscle cells.

Its subcellular location is the nucleus. It carries out the reaction [protein]-peptidylproline (omega=180) = [protein]-peptidylproline (omega=0). The catalysed reaction is S-ubiquitinyl-[E2 ubiquitin-conjugating enzyme]-L-cysteine + [acceptor protein]-L-lysine = [E2 ubiquitin-conjugating enzyme]-L-cysteine + N(6)-ubiquitinyl-[acceptor protein]-L-lysine.. The protein operates within protein modification; protein ubiquitination. Its function is as follows. May catalyze the cis-trans isomerization of proline imidic peptide bonds in oligopeptides thereby assisting the folding of proteins. May also function as a chaperone, playing a role in intracellular transport of proteins. May also have a protein ubiquitin ligase activity acting as an E3 ubiquitin protein ligase or as a ubiquitin-ubiquitin ligase promoting elongation of ubiquitin chains on proteins. Influences the hermaphrodite switch from spermatogenesis to oogenesis. Required for body wall muscle cell development. This chain is Peptidyl-prolyl cis-trans isomerase 4 (cyn-4), found in Caenorhabditis elegans.